A 495-amino-acid chain; its full sequence is Glucokinase (495 aa).

A Hexokinase domain is found at Ser3–Leu483. The segment at Asn57 to Val206 is hexokinase small subdomain. Position 93 (Lys93) interacts with ATP. A glucose-binding region spans residues Asp149 to Phe175. The tract at residues Asn207–Asp472 is hexokinase large subdomain. Asp472–Gly477 contacts ATP.

It belongs to the hexokinase family. Monomer.

The catalysed reaction is D-glucose + ATP = D-glucose 6-phosphate + ADP + H(+). It catalyses the reaction a D-hexose + ATP = a D-hexose 6-phosphate + ADP + H(+). It carries out the reaction D-mannose + ATP = D-mannose 6-phosphate + ADP + H(+). The enzyme catalyses D-glucosamine + ATP = D-glucosamine 6-phosphate + ADP + H(+). It functions in the pathway carbohydrate metabolism; hexose metabolism. The protein operates within carbohydrate degradation; glycolysis; D-glyceraldehyde 3-phosphate and glycerone phosphate from D-glucose: step 1/4. Its function is as follows. The enzyme has great affinity for glucose. Mannose, 2-deoxyglucose and glucosamine can serve as substrates. This is Glucokinase (glkA) from Aspergillus niger.